Reading from the N-terminus, the 731-residue chain is 1,4-alpha-glucan branching enzyme GlgB (731 aa).

The Nucleophile role is filled by D411. Catalysis depends on E464, which acts as the Proton donor.

This sequence belongs to the glycosyl hydrolase 13 family. GlgB subfamily. In terms of assembly, monomer.

It carries out the reaction Transfers a segment of a (1-&gt;4)-alpha-D-glucan chain to a primary hydroxy group in a similar glucan chain.. Its pathway is glycan biosynthesis; glycogen biosynthesis. Functionally, catalyzes the formation of the alpha-1,6-glucosidic linkages in glycogen by scission of a 1,4-alpha-linked oligosaccharide from growing alpha-1,4-glucan chains and the subsequent attachment of the oligosaccharide to the alpha-1,6 position. This chain is 1,4-alpha-glucan branching enzyme GlgB, found in Mycobacterium tuberculosis (strain ATCC 25177 / H37Ra).